The sequence spans 787 residues: Penicillin-binding protein 1A (787 aa).

At 1-6 (MYKSLF) the chain is on the cytoplasmic side. Residues 7 to 27 (LCLKIFAVLILIGCSVTAYII) traverse the membrane as a helical; Signal-anchor for type II membrane protein segment. Over 28–787 (YHYSHDLPDY…GMLDQSQEIY (760 aa)) the chain is Periplasmic. The tract at residues 49-220 (TRIYSRDGKL…SELNPDKNYS (172 aa)) is transglycosylase. Catalysis depends on glutamate 87, which acts as the Proton donor; for transglycosylase activity. The interval 398–711 (DVIVVEPIKD…SNVVLPIFID (314 aa)) is transpeptidase. Serine 457 serves as the catalytic Acyl-ester intermediate; for transpeptidase activity.

The protein in the N-terminal section; belongs to the glycosyltransferase 51 family. This sequence in the C-terminal section; belongs to the transpeptidase family.

The protein resides in the cell inner membrane. The enzyme catalyses [GlcNAc-(1-&gt;4)-Mur2Ac(oyl-L-Ala-gamma-D-Glu-L-Lys-D-Ala-D-Ala)](n)-di-trans,octa-cis-undecaprenyl diphosphate + beta-D-GlcNAc-(1-&gt;4)-Mur2Ac(oyl-L-Ala-gamma-D-Glu-L-Lys-D-Ala-D-Ala)-di-trans,octa-cis-undecaprenyl diphosphate = [GlcNAc-(1-&gt;4)-Mur2Ac(oyl-L-Ala-gamma-D-Glu-L-Lys-D-Ala-D-Ala)](n+1)-di-trans,octa-cis-undecaprenyl diphosphate + di-trans,octa-cis-undecaprenyl diphosphate + H(+). The catalysed reaction is Preferential cleavage: (Ac)2-L-Lys-D-Ala-|-D-Ala. Also transpeptidation of peptidyl-alanyl moieties that are N-acyl substituents of D-alanine.. The protein operates within cell wall biogenesis; peptidoglycan biosynthesis. In terms of biological role, cell wall formation. Synthesis of cross-linked peptidoglycan from the lipid intermediates. The enzyme has a penicillin-insensitive transglycosylase N-terminal domain (formation of linear glycan strands) and a penicillin-sensitive transpeptidase C-terminal domain (cross-linking of the peptide subunits). The sequence is that of Penicillin-binding protein 1A (mrcA) from Rickettsia prowazekii (strain Madrid E).